We begin with the raw amino-acid sequence, 164 residues long: CASP-like protein 1C2 (164 aa).

The Cytoplasmic portion of the chain corresponds to 1–8 (MAVELKKV). The helical transmembrane segment at 9–29 (FSTILRFLALAATVVAVIVMI) threads the bilayer. Topologically, residues 30–53 (RSHDSAIVLNLTFSAKYNNTPAFK) are extracellular. Asn39 carries an N-linked (GlcNAc...) asparagine glycan. Residues 54-74 (YFVIAEGIASVYTIIVIFLWS) traverse the membrane as a helical segment. The Cytoplasmic segment spans residues 75 to 80 (KGLLGR). A helical transmembrane segment spans residues 81-101 (LIVILDMVTTVLLTSSISAAL). The Extracellular segment spans residues 102-129 (AIAQVGKKGNSHAGWLPVCGQVPKFCDQ). The helical transmembrane segment at 130 to 150 (AIIALVAGFVAAIVYFMLLLC) threads the bilayer. The Cytoplasmic portion of the chain corresponds to 151-164 (SLHAVLTPIFAVKP).

It belongs to the Casparian strip membrane proteins (CASP) family. Homodimer and heterodimers.

The protein resides in the cell membrane. The chain is CASP-like protein 1C2 from Ricinus communis (Castor bean).